A 599-amino-acid polypeptide reads, in one-letter code: Elongation factor 4 (599 aa).

Residues K2 to E184 enclose the tr-type G domain. Residues D14–T19 and N131–D134 each bind GTP.

This sequence belongs to the TRAFAC class translation factor GTPase superfamily. Classic translation factor GTPase family. LepA subfamily.

Its subcellular location is the cell inner membrane. It catalyses the reaction GTP + H2O = GDP + phosphate + H(+). Required for accurate and efficient protein synthesis under certain stress conditions. May act as a fidelity factor of the translation reaction, by catalyzing a one-codon backward translocation of tRNAs on improperly translocated ribosomes. Back-translocation proceeds from a post-translocation (POST) complex to a pre-translocation (PRE) complex, thus giving elongation factor G a second chance to translocate the tRNAs correctly. Binds to ribosomes in a GTP-dependent manner. In Yersinia pestis bv. Antiqua (strain Antiqua), this protein is Elongation factor 4.